A 481-amino-acid polypeptide reads, in one-letter code: MTTALEEQNTQQASVAGRVVRVIGPVVDVEFPRGELPALYNALTVEVTLEAVAKTITLEVAQHLGDNLVRAVSMAPTDGLVRGAVVTDSGKPISVPVGDVVKGHVFNALGDCLDEPGLGRDGEQWGIHRDPPPFDQLEGKTEILETGIKVIDLLTPYVKGGKIGLFGGAGVGKTVLIQEMITRIAREFSGTSVFAGVGERTREGTDLFLEMEEMGVLQDTALVFGQMDEPPGVRMRVALSGLTMAEYFRDVQHQDVLLFIDNIFRFTQAGSEVSTLLGRMPSAVGYQPTLADEMGVLQERITSIKGKSITSLQAVYVPADDYTDPAPATTFAHLDATTELDRAIASKGIYPAVNPLTSTSRILEPGIVGERHYAVAQRVINILQKNKELQDIIAILGMDELSEEDKITVQRARRLERFLGQNFFVAEKFTGIPGSYVPLAHTIDAFERICNGDFDHYPEQAFNGLGGLDDVEAAYKKMTEK.

167-174 is an ATP binding site; it reads GGAGVGKT.

This sequence belongs to the ATPase alpha/beta chains family. F-type ATPases have 2 components, CF(1) - the catalytic core - and CF(0) - the membrane proton channel. CF(1) has five subunits: alpha(3), beta(3), gamma(1), delta(1), epsilon(1). CF(0) has three main subunits: a(1), b(2) and c(9-12). The alpha and beta chains form an alternating ring which encloses part of the gamma chain. CF(1) is attached to CF(0) by a central stalk formed by the gamma and epsilon chains, while a peripheral stalk is formed by the delta and b chains.

The protein resides in the cell membrane. The catalysed reaction is ATP + H2O + 4 H(+)(in) = ADP + phosphate + 5 H(+)(out). Functionally, produces ATP from ADP in the presence of a proton gradient across the membrane. The catalytic sites are hosted primarily by the beta subunits. This is ATP synthase subunit beta from Corynebacterium diphtheriae (strain ATCC 700971 / NCTC 13129 / Biotype gravis).